Reading from the N-terminus, the 31-residue chain is Cytochrome b6-f complex subunit 8 (31 aa).

A helical transmembrane segment spans residues 5–25; that stretch reads IVSLAWAALMVVFTFSLSLVV.

This sequence belongs to the PetN family. As to quaternary structure, the 4 large subunits of the cytochrome b6-f complex are cytochrome b6, subunit IV (17 kDa polypeptide, PetD), cytochrome f and the Rieske protein, while the 4 small subunits are PetG, PetL, PetM and PetN. The complex functions as a dimer.

The protein resides in the plastid. It is found in the chloroplast thylakoid membrane. Functionally, component of the cytochrome b6-f complex, which mediates electron transfer between photosystem II (PSII) and photosystem I (PSI), cyclic electron flow around PSI, and state transitions. This Acorus calamus (Sweet flag) protein is Cytochrome b6-f complex subunit 8.